The sequence spans 245 residues: Probable inactive carboxylesterase Os04g0669700 (245 aa).

Residues serine 115 and histidine 201 each act as charge relay system in the active site.

It belongs to the AB hydrolase superfamily. AB hydrolase 2 family.

This chain is Probable inactive carboxylesterase Os04g0669700, found in Oryza sativa subsp. japonica (Rice).